A 178-amino-acid polypeptide reads, in one-letter code: Inner membrane-spanning protein YciB (178 aa).

5 helical membrane passes run 22–42 (IFWATAALIVATALAVIYSWY), 50–70 (MTLVTFVLVAVFGGLTIYFHN), 76–96 (WKVTIIYALFAGALLIGQWVM), 121–141 (IAWALFFIFCGLLNIYVAFWL), and 149–169 (FKVFGIPGLTLVFTLLSGVYI).

The protein belongs to the YciB family.

The protein localises to the cell inner membrane. Functionally, plays a role in cell envelope biogenesis, maintenance of cell envelope integrity and membrane homeostasis. This is Inner membrane-spanning protein YciB from Cronobacter sakazakii (strain ATCC BAA-894) (Enterobacter sakazakii).